A 132-amino-acid polypeptide reads, in one-letter code: Binder of sperm protein homolog 1 (132 aa).

Residues 1–17 (MGSLMLLFVETTRNSSA) form the signal peptide. 2 Fibronectin type-II domains span residues 40–84 (VTDG…FCSA) and 85–132 (EDFA…KYCE). 4 cysteine pairs are disulfide-bonded: cysteine 45–cysteine 69, cysteine 59–cysteine 82, cysteine 90–cysteine 116, and cysteine 104–cysteine 131. N-linked (GlcNAc...) asparagine glycosylation occurs at asparagine 53.

It belongs to the seminal plasma protein family. In terms of tissue distribution, expressed only in the epididymis.

The protein resides in the secreted. Binds sperm in vitro and promotes sperm capacitation. Specifically promotes capacitation induced by high density lipoproteins (HDLs). Also binds heparin, phospholipid liposomes, and weakly to gelatin. Does not bind chondroitin sulfate B. This chain is Binder of sperm protein homolog 1 (BSPH1), found in Homo sapiens (Human).